The chain runs to 155 residues: Ribosome maturation factor RimP (155 aa).

Belongs to the RimP family.

The protein localises to the cytoplasm. Required for maturation of 30S ribosomal subunits. This Gloeothece citriformis (strain PCC 7424) (Cyanothece sp. (strain PCC 7424)) protein is Ribosome maturation factor RimP.